We begin with the raw amino-acid sequence, 144 residues long: Large ribosomal subunit protein uL22 (144 aa).

Basic residues predominate over residues 124–137 (RLKKRVLGQNKRKQ). A disordered region spans residues 124-144 (RLKKRVLGQNKRKQSVSGEKK).

This sequence belongs to the universal ribosomal protein uL22 family. In terms of assembly, part of the 50S ribosomal subunit.

Functionally, this protein binds specifically to 23S rRNA; its binding is stimulated by other ribosomal proteins, e.g. L4, L17, and L20. It is important during the early stages of 50S assembly. It makes multiple contacts with different domains of the 23S rRNA in the assembled 50S subunit and ribosome. The globular domain of the protein is located near the polypeptide exit tunnel on the outside of the subunit, while an extended beta-hairpin is found that lines the wall of the exit tunnel in the center of the 70S ribosome. This chain is Large ribosomal subunit protein uL22, found in Mycoplasmoides gallisepticum (strain R(low / passage 15 / clone 2)) (Mycoplasma gallisepticum).